We begin with the raw amino-acid sequence, 863 residues long: DNA-directed RNA polymerase subunit beta' (863 aa).

Residues 1–83 (MSGEVAQDQP…SKKKETKASQ (83 aa)) are disordered. The span at 23 to 36 (EIVNSAITVQSSAK) shows a compositional bias: polar residues. Zn(2+)-binding residues include Cys-159, Cys-161, Cys-180, and Cys-183. Asp-621, Asp-623, and Asp-625 together coordinate Mg(2+).

It belongs to the RNA polymerase beta' chain family. RpoC1 subfamily. In plastids the minimal PEP RNA polymerase catalytic core is composed of four subunits: alpha, beta, beta', and beta''. When a (nuclear-encoded) sigma factor is associated with the core the holoenzyme is formed, which can initiate transcription. Mg(2+) serves as cofactor. Requires Zn(2+) as cofactor.

The protein resides in the plastid. It is found in the chloroplast. It catalyses the reaction RNA(n) + a ribonucleoside 5'-triphosphate = RNA(n+1) + diphosphate. Functionally, DNA-dependent RNA polymerase catalyzes the transcription of DNA into RNA using the four ribonucleoside triphosphates as substrates. The polypeptide is DNA-directed RNA polymerase subunit beta' (Nephroselmis olivacea (Green alga)).